The chain runs to 422 residues: 2-oxoglutarate and iron-dependent oxygenase JMJD4 (422 aa).

Residues 139-298 (QRNFPEHNIY…IMWQFLQDEL (160 aa)) enclose the JmjC domain. Fe cation is bound by residues His-186, Asp-188, and His-266.

Belongs to the JMJD6 family. Fe(2+) serves as cofactor.

The protein resides in the cytoplasm. The catalysed reaction is L-lysyl-[protein] + 2-oxoglutarate + O2 = 4-hydroxy-L-lysyl-[protein] + succinate + CO2. Its function is as follows. Catalyzes the 2-oxoglutarate and iron-dependent C4-lysyl hydroxylation of ETF1 at 'Lys-63' thereby promoting the translational termination efficiency of ETF1. The polypeptide is 2-oxoglutarate and iron-dependent oxygenase JMJD4 (jmjd4) (Danio rerio (Zebrafish)).